The chain runs to 712 residues: tRNA 5-methylaminomethyl-2-thiouridine biosynthesis bifunctional protein MnmC (712 aa).

The segment at methionine 1–aspartate 268 is tRNA (mnm(5)s(2)U34)-methyltransferase. The interval isoleucine 292–leucine 712 is FAD-dependent cmnm(5)s(2)U34 oxidoreductase.

It in the N-terminal section; belongs to the methyltransferase superfamily. tRNA (mnm(5)s(2)U34)-methyltransferase family. This sequence in the C-terminal section; belongs to the DAO family. Requires FAD as cofactor.

The protein resides in the cytoplasm. The catalysed reaction is 5-aminomethyl-2-thiouridine(34) in tRNA + S-adenosyl-L-methionine = 5-methylaminomethyl-2-thiouridine(34) in tRNA + S-adenosyl-L-homocysteine + H(+). In terms of biological role, catalyzes the last two steps in the biosynthesis of 5-methylaminomethyl-2-thiouridine (mnm(5)s(2)U) at the wobble position (U34) in tRNA. Catalyzes the FAD-dependent demodification of cmnm(5)s(2)U34 to nm(5)s(2)U34, followed by the transfer of a methyl group from S-adenosyl-L-methionine to nm(5)s(2)U34, to form mnm(5)s(2)U34. In Shewanella sediminis (strain HAW-EB3), this protein is tRNA 5-methylaminomethyl-2-thiouridine biosynthesis bifunctional protein MnmC.